The primary structure comprises 244 residues: MIRKDAKRSALVLFSGGQDSATCLAWALERYETVETLGFDYGQRHRVELECREGFRNAVARAFPAWAERLGDDHMIDLSVLGAISDTAMTREIEIEATANGLPNTFVPGRNLMFMTIAAAIAYRRGLQVLVGGMCETDFSGYPDCRDDTMKALQVALNLGMDTRVLLETPLMWLDKGDTWRLAHQLGGDELVELVRVETHTCYVGERAELHAWGFGCGECPACRLRKRGYEAYLSGEKVTEAPV.

An ATP-binding site is contributed by 14–24 (FSGGQDSATCL). Zn(2+) is bound by residues Cys-202, Cys-217, Cys-220, and Cys-223.

This sequence belongs to the QueC family. Requires Zn(2+) as cofactor.

It carries out the reaction 7-carboxy-7-deazaguanine + NH4(+) + ATP = 7-cyano-7-deazaguanine + ADP + phosphate + H2O + H(+). The protein operates within purine metabolism; 7-cyano-7-deazaguanine biosynthesis. Its function is as follows. Catalyzes the ATP-dependent conversion of 7-carboxy-7-deazaguanine (CDG) to 7-cyano-7-deazaguanine (preQ(0)). This chain is 7-cyano-7-deazaguanine synthase, found in Paraburkholderia phytofirmans (strain DSM 17436 / LMG 22146 / PsJN) (Burkholderia phytofirmans).